A 245-amino-acid chain; its full sequence is Aliphatic sulfonates import ATP-binding protein SsuB 1 (245 aa).

In terms of domain architecture, ABC transporter spans 9 to 227; that stretch reads LDLVGIGHRY…HRGDAQLAAW (219 aa). 41–48 provides a ligand contact to ATP; that stretch reads GPSGVGKS.

The protein belongs to the ABC transporter superfamily. Aliphatic sulfonates importer (TC 3.A.1.17.2) family. As to quaternary structure, the complex is composed of two ATP-binding proteins (SsuB), two transmembrane proteins (SsuC) and a solute-binding protein (SsuA).

It localises to the cell membrane. It catalyses the reaction ATP + H2O + aliphatic sulfonate-[sulfonate-binding protein]Side 1 = ADP + phosphate + aliphatic sulfonateSide 2 + [sulfonate-binding protein]Side 1.. Its function is as follows. Part of the ABC transporter complex SsuABC involved in aliphatic sulfonates import. Responsible for energy coupling to the transport system. The protein is Aliphatic sulfonates import ATP-binding protein SsuB 1 of Rhodococcus jostii (strain RHA1).